A 364-amino-acid chain; its full sequence is Protein Wnt-6 (364 aa).

An N-terminal signal peptide occupies residues Met1–Gly23. Intrachain disulfides connect Cys75–Cys86, Cys123–Cys131, Cys133–Cys171, Cys221–Cys235, Cys223–Cys230, Cys293–Cys324, Cys309–Cys319, Cys323–Cys363, Cys339–Cys354, Cys341–Cys351, and Cys346–Cys347. The N-linked (GlcNAc...) asparagine glycan is linked to Asn85. Positions Ala140–Ala162 are disordered. Residue Ser227 is the site of O-palmitoleoyl serine; by PORCN attachment. Asn310 carries N-linked (GlcNAc...) asparagine glycosylation.

The protein belongs to the Wnt family. As to quaternary structure, interacts with PORCN. Post-translationally, palmitoleoylation is required for efficient binding to frizzled receptors. Depalmitoleoylation leads to Wnt signaling pathway inhibition. As to expression, detected in ileum, colon and stomach (at protein level).

It localises to the secreted. It is found in the extracellular space. The protein localises to the extracellular matrix. Ligand for members of the frizzled family of seven transmembrane receptors. Probable developmental protein. May be a signaling molecule which affects the development of discrete regions of tissues. Is likely to signal over only few cell diameters. This Mus musculus (Mouse) protein is Protein Wnt-6 (Wnt6).